We begin with the raw amino-acid sequence, 133 residues long: ATP synthase epsilon chain (133 aa).

It belongs to the ATPase epsilon chain family. F-type ATPases have 2 components, CF(1) - the catalytic core - and CF(0) - the membrane proton channel. CF(1) has five subunits: alpha(3), beta(3), gamma(1), delta(1), epsilon(1). CF(0) has three main subunits: a, b and c.

The protein resides in the cell membrane. Functionally, produces ATP from ADP in the presence of a proton gradient across the membrane. The sequence is that of ATP synthase epsilon chain from Clostridium perfringens (strain SM101 / Type A).